Consider the following 288-residue polypeptide: Oxaloacetate decarboxylase (288 aa).

Ser-47 is a binding site for substrate. Asp-85 contributes to the Mg(2+) binding site. Residues Arg-156 and His-232 each coordinate substrate.

Belongs to the isocitrate lyase/PEP mutase superfamily. Oxaloacetate decarboxylase family. Homotetramer; dimer of dimers. Mg(2+) serves as cofactor.

It catalyses the reaction oxaloacetate + H(+) = pyruvate + CO2. Functionally, catalyzes the decarboxylation of oxaloacetate into pyruvate. Seems to play a role in maintaining cellular concentrations of bicarbonate and pyruvate. The chain is Oxaloacetate decarboxylase from Rhodopseudomonas palustris (strain TIE-1).